A 284-amino-acid polypeptide reads, in one-letter code: BTB/POZ domain-containing protein 2 (284 aa).

In terms of domain architecture, BTB spans 37-108 (SDTTLIIKGE…LYCDSPRIPA (72 aa)).

In terms of assembly, interacts with cul3.

The protein resides in the cytoplasm. It localises to the nucleus. It participates in protein modification; protein ubiquitination. Its function is as follows. Probable substrate-specific adapter of an E3 ubiquitin-protein ligase complex which mediates the ubiquitination and subsequent proteasomal degradation of target proteins. This is BTB/POZ domain-containing protein 2 (btb2) from Schizosaccharomyces pombe (strain 972 / ATCC 24843) (Fission yeast).